The chain runs to 211 residues: Protein-L-isoaspartate O-methyltransferase (211 aa).

Serine 60 is a catalytic residue.

This sequence belongs to the methyltransferase superfamily. L-isoaspartyl/D-aspartyl protein methyltransferase family.

The protein resides in the cytoplasm. The catalysed reaction is [protein]-L-isoaspartate + S-adenosyl-L-methionine = [protein]-L-isoaspartate alpha-methyl ester + S-adenosyl-L-homocysteine. Catalyzes the methyl esterification of L-isoaspartyl residues in peptides and proteins that result from spontaneous decomposition of normal L-aspartyl and L-asparaginyl residues. It plays a role in the repair and/or degradation of damaged proteins. The polypeptide is Protein-L-isoaspartate O-methyltransferase (Pseudomonas savastanoi pv. phaseolicola (strain 1448A / Race 6) (Pseudomonas syringae pv. phaseolicola (strain 1448A / Race 6))).